Reading from the N-terminus, the 728-residue chain is Catalase-peroxidase 1 (728 aa).

Residues 91–218 (WHSAGTYRTA…LAAVQMGLIY (128 aa)) constitute a cross-link (tryptophyl-tyrosyl-methioninium (Trp-Tyr) (with M-244)). The Proton acceptor role is filled by His-92. Positions 218-244 (YVNPEGPDGNPDPVAAARDIRDTFARM) form a cross-link, tryptophyl-tyrosyl-methioninium (Tyr-Met) (with W-91). Residue His-259 participates in heme b binding.

The protein belongs to the peroxidase family. Peroxidase/catalase subfamily. As to quaternary structure, homodimer or homotetramer. Requires heme b as cofactor. Formation of the three residue Trp-Tyr-Met cross-link is important for the catalase, but not the peroxidase activity of the enzyme.

The catalysed reaction is H2O2 + AH2 = A + 2 H2O. It carries out the reaction 2 H2O2 = O2 + 2 H2O. Bifunctional enzyme with both catalase and broad-spectrum peroxidase activity. The polypeptide is Catalase-peroxidase 1 (Burkholderia ambifaria (strain MC40-6)).